The sequence spans 662 residues: Sodium/glucose cotransporter 1 (662 aa).

The Extracellular segment spans residues M1–R24. Residues N25–M47 form a helical membrane-spanning segment. Over F48–V66 the chain is Cytoplasmic. A helical membrane pass occupies residues W67–T90. The Extracellular segment spans residues G91 to G95. Residues I96–V117 form a helical membrane-spanning segment. Residues P118–K139 are Cytoplasmic-facing. A helical membrane pass occupies residues R140 to I169. The Extracellular portion of the chain corresponds to Q170–D176. A helical transmembrane segment spans residues I177–I193. Topologically, residues T194–Y202 are cytoplasmic. Residues T203–F221 traverse the membrane as a helical segment. At A222 to P275 the chain is on the extracellular side. The N-linked (GlcNAc...) asparagine glycan is linked to N248. Disulfide bonds link C255-C511, C255-C608, C345-C351, C355-C361, and C517-C522. The helical transmembrane segment at W276–Q295 threads the bilayer. Over V296–H309 the chain is Cytoplasmic. Residues V310–M331 form a helical membrane-spanning segment. The Extracellular segment spans residues G332–P375. A helical transmembrane segment spans residues N376–T406. The Cytoplasmic portion of the chain corresponds to M407 to L422. Residues M423–V444 traverse the membrane as a helical segment. Over Q445–Q451 the chain is Extracellular. The helical transmembrane segment at L452–W477 threads the bilayer. Q457 provides a ligand contact to D-glucose. The Cytoplasmic segment spans residues K478–N481. Residues E482 to F504 traverse the membrane as a helical segment. Residues A505–H525 are Extracellular-facing. A helical transmembrane segment spans residues Y526–F547. The Cytoplasmic segment spans residues T548–V642. Residues V643–Y660 traverse the membrane as a helical segment. Residues F661–A662 lie on the Extracellular side of the membrane.

Belongs to the sodium:solute symporter (SSF) (TC 2.A.21) family. Post-translationally, N-glycosylation is not necessary for the cotransporter function. In terms of tissue distribution, found predominantly in intestine, renal cortex and in outer renal medulla.

The protein localises to the apical cell membrane. The enzyme catalyses D-glucose(out) + 2 Na(+)(out) = D-glucose(in) + 2 Na(+)(in). The catalysed reaction is D-galactose(out) + 2 Na(+)(out) = D-galactose(in) + 2 Na(+)(in). Enhanced by the interaction with PDZK1IP1/MAP17; but unlike SLC5A2/SGLT2, PDZK1IP1 is not essential for SLC5A1 transporter activity. Possibly modulated by cholesterol binding. In terms of biological role, electrogenic Na(+)-coupled sugar symporter that actively transports D-glucose or D-galactose at the plasma membrane, with a Na(+) to sugar coupling ratio of 2:1. Transporter activity is driven by a transmembrane Na(+) electrochemical gradient set by the Na(+)/K(+) pump. Has a primary role in the transport of dietary monosaccharides from enterocytes to blood. Responsible for the absorption of D-glucose or D-galactose across the apical brush-border membrane of enterocytes, whereas basolateral exit is provided by GLUT2. Additionally, functions as a D-glucose sensor in enteroendocrine cells, triggering the secretion of the incretins GCG and GIP that control food intake and energy homeostasis. Together with SGLT2, functions in reabsorption of D-glucose from glomerular filtrate, playing a nonredundant role in the S3 segment of the proximal tubules. Transports D-glucose into endometrial epithelial cells, controlling glycogen synthesis and nutritional support for the embryo as well as the decidual transformation of endometrium prior to conception. Acts as a water channel enabling passive water transport in response to the osmotic gradient created upon sugar and Na(+) uptake. Has high water conductivity comparable to aquaporins and therefore is expected to play an important role in transepithelial water permeability, especially in the small intestine. The protein is Sodium/glucose cotransporter 1 (SLC5A1) of Oryctolagus cuniculus (Rabbit).